The chain runs to 225 residues: Urease accessory protein UreF (225 aa).

The protein belongs to the UreF family. In terms of assembly, ureD, UreF and UreG form a complex that acts as a GTP-hydrolysis-dependent molecular chaperone, activating the urease apoprotein by helping to assemble the nickel containing metallocenter of UreC. The UreE protein probably delivers the nickel.

The protein localises to the cytoplasm. Functionally, required for maturation of urease via the functional incorporation of the urease nickel metallocenter. This is Urease accessory protein UreF from Arthrobacter sp. (strain FB24).